The chain runs to 394 residues: Xylose isomerase (394 aa).

Catalysis depends on residues H54 and D57. Positions 181, 217, 220, 245, 255, 257, and 292 each coordinate Mg(2+).

The protein belongs to the xylose isomerase family. As to quaternary structure, homotetramer. Mg(2+) is required as a cofactor.

It is found in the cytoplasm. It carries out the reaction alpha-D-xylose = alpha-D-xylulofuranose. In Actinoplanes sp. (strain ATCC 31351 / 3876) (Ampullariella sp.), this protein is Xylose isomerase (xylA).